Consider the following 263-residue polypeptide: Type III pantothenate kinase (263 aa).

ATP is bound at residue 6-13 (DVGNTNIK). 108-111 (GSDR) contributes to the substrate binding site. Asp110 functions as the Proton acceptor in the catalytic mechanism. K(+) is bound at residue Asp131. ATP is bound at residue Thr134. Thr187 is a binding site for substrate.

It belongs to the type III pantothenate kinase family. In terms of assembly, homodimer. Requires NH4(+) as cofactor. K(+) is required as a cofactor.

The protein resides in the cytoplasm. It carries out the reaction (R)-pantothenate + ATP = (R)-4'-phosphopantothenate + ADP + H(+). Its pathway is cofactor biosynthesis; coenzyme A biosynthesis; CoA from (R)-pantothenate: step 1/5. Catalyzes the phosphorylation of pantothenate (Pan), the first step in CoA biosynthesis. In Anaplasma phagocytophilum (strain HZ), this protein is Type III pantothenate kinase.